The sequence spans 450 residues: Signal recognition particle protein (450 aa).

Residues 107-114 (GLQGVGKT), 190-194 (DTAGR), and 248-251 (TKTD) contribute to the GTP site.

Belongs to the GTP-binding SRP family. SRP54 subfamily. As to quaternary structure, part of the signal recognition particle protein translocation system, which is composed of SRP and FtsY. SRP is a ribonucleoprotein composed of Ffh and a 4.5S RNA molecule.

It is found in the cytoplasm. The catalysed reaction is GTP + H2O = GDP + phosphate + H(+). Functionally, involved in targeting and insertion of nascent membrane proteins into the cytoplasmic membrane. Binds to the hydrophobic signal sequence of the ribosome-nascent chain (RNC) as it emerges from the ribosomes. The SRP-RNC complex is then targeted to the cytoplasmic membrane where it interacts with the SRP receptor FtsY. Interaction with FtsY leads to the transfer of the RNC complex to the Sec translocase for insertion into the membrane, the hydrolysis of GTP by both Ffh and FtsY, and the dissociation of the SRP-FtsY complex into the individual components. This Buchnera aphidicola subsp. Schizaphis graminum (strain Sg) protein is Signal recognition particle protein.